Reading from the N-terminus, the 439-residue chain is Ribosomal protein uS12 methylthiotransferase RimO (439 aa).

In terms of domain architecture, MTTase N-terminal spans 3–115 (NKLHIVSLGC…IDELLVEKKS (113 aa)). [4Fe-4S] cluster contacts are provided by Cys12, Cys46, Cys78, Cys146, Cys150, and Cys153. Positions 132–361 (TGSTYHAYIK…GKIAADVMQA (230 aa)) constitute a Radical SAM core domain.

Belongs to the methylthiotransferase family. RimO subfamily. The cofactor is [4Fe-4S] cluster.

The protein resides in the cytoplasm. The enzyme catalyses L-aspartate(89)-[ribosomal protein uS12]-hydrogen + (sulfur carrier)-SH + AH2 + 2 S-adenosyl-L-methionine = 3-methylsulfanyl-L-aspartate(89)-[ribosomal protein uS12]-hydrogen + (sulfur carrier)-H + 5'-deoxyadenosine + L-methionine + A + S-adenosyl-L-homocysteine + 2 H(+). Catalyzes the methylthiolation of an aspartic acid residue of ribosomal protein uS12. The polypeptide is Ribosomal protein uS12 methylthiotransferase RimO (Sulfurimonas denitrificans (strain ATCC 33889 / DSM 1251) (Thiomicrospira denitrificans (strain ATCC 33889 / DSM 1251))).